The chain runs to 31 residues: Photosystem I reaction center subunit XII (31 aa).

Residues 7–26 form a helical membrane-spanning segment; it reads QVFLALIIALIPGILADRLG.

The protein belongs to the PsaM family.

Its subcellular location is the plastid. It is found in the chloroplast thylakoid membrane. The chain is Photosystem I reaction center subunit XII from Euglena deses.